The chain runs to 159 residues: NADH-quinone oxidoreductase subunit B 2 (159 aa).

Positions 37, 38, 102, and 132 each coordinate [4Fe-4S] cluster.

This sequence belongs to the complex I 20 kDa subunit family. In terms of assembly, NDH-1 is composed of 14 different subunits. Subunits NuoB, C, D, E, F, and G constitute the peripheral sector of the complex. It depends on [4Fe-4S] cluster as a cofactor.

It is found in the cell inner membrane. The enzyme catalyses a quinone + NADH + 5 H(+)(in) = a quinol + NAD(+) + 4 H(+)(out). NDH-1 shuttles electrons from NADH, via FMN and iron-sulfur (Fe-S) centers, to quinones in the respiratory chain. Couples the redox reaction to proton translocation (for every two electrons transferred, four hydrogen ions are translocated across the cytoplasmic membrane), and thus conserves the redox energy in a proton gradient. The chain is NADH-quinone oxidoreductase subunit B 2 from Azoarcus sp. (strain BH72).